The chain runs to 70 residues: Acyl carrier protein (70 aa).

The Carrier domain maps to 2–70 (SDIADRVKKI…ETIQTFGDAP (69 aa)). The residue at position 37 (serine 37) is an O-(pantetheine 4'-phosphoryl)serine.

The protein belongs to the acyl carrier protein (ACP) family. In terms of processing, 4'-phosphopantetheine is transferred from CoA to a specific serine of apo-ACP by AcpS. This modification is essential for activity because fatty acids are bound in thioester linkage to the sulfhydryl of the prosthetic group.

It is found in the cytoplasm. The protein operates within lipid metabolism; fatty acid biosynthesis. Its function is as follows. Carrier of the growing fatty acid chain in fatty acid biosynthesis. In Cereibacter sphaeroides (Rhodobacter sphaeroides), this protein is Acyl carrier protein.